The following is a 335-amino-acid chain: MNIAVSKPDLTIRLCGPRGFCAGVDRAIQIVVLALKSYGAPVYVRHEIVHNRYVVEGLEAKGAIFVEELDEIPAEHRAQPVVFSAHGVPKAVPEDADARNLFYLDATCPLVSKVHKQAMRHNRLGRHVVLIGHAGHPEVIGTMGQLPEGTVSLIETVEDVDVYEPADPDNLGYVTQTTLSVDDTAGVIARLQERFPNLTAPSADSICYATTNRQEVVKQAAPGCDLFIVVGAPNSSNSKRLVEVALRAGATKSVLVQRAAEIDWDDIGDIKTVGLSAGASAPEVIVNEIIEAFRDRYSAVVELAETVKETENFLVNRELRNIELTTADMAFVNGE.

Position 21 (Cys21) interacts with [4Fe-4S] cluster. Positions 50 and 86 each coordinate (2E)-4-hydroxy-3-methylbut-2-enyl diphosphate. His50 and His86 together coordinate dimethylallyl diphosphate. Positions 50 and 86 each coordinate isopentenyl diphosphate. Residue Cys108 coordinates [4Fe-4S] cluster. His136 serves as a coordination point for (2E)-4-hydroxy-3-methylbut-2-enyl diphosphate. His136 is a dimethylallyl diphosphate binding site. Position 136 (His136) interacts with isopentenyl diphosphate. The active-site Proton donor is the Glu138. Thr177 contributes to the (2E)-4-hydroxy-3-methylbut-2-enyl diphosphate binding site. Residue Cys207 coordinates [4Fe-4S] cluster. Residues Ser235, Ser236, Asn237, and Ser280 each contribute to the (2E)-4-hydroxy-3-methylbut-2-enyl diphosphate site. The dimethylallyl diphosphate site is built by Ser235, Ser236, Asn237, and Ser280. The isopentenyl diphosphate site is built by Ser235, Ser236, Asn237, and Ser280.

Belongs to the IspH family. The cofactor is [4Fe-4S] cluster.

It catalyses the reaction isopentenyl diphosphate + 2 oxidized [2Fe-2S]-[ferredoxin] + H2O = (2E)-4-hydroxy-3-methylbut-2-enyl diphosphate + 2 reduced [2Fe-2S]-[ferredoxin] + 2 H(+). It carries out the reaction dimethylallyl diphosphate + 2 oxidized [2Fe-2S]-[ferredoxin] + H2O = (2E)-4-hydroxy-3-methylbut-2-enyl diphosphate + 2 reduced [2Fe-2S]-[ferredoxin] + 2 H(+). It participates in isoprenoid biosynthesis; dimethylallyl diphosphate biosynthesis; dimethylallyl diphosphate from (2E)-4-hydroxy-3-methylbutenyl diphosphate: step 1/1. The protein operates within isoprenoid biosynthesis; isopentenyl diphosphate biosynthesis via DXP pathway; isopentenyl diphosphate from 1-deoxy-D-xylulose 5-phosphate: step 6/6. Functionally, catalyzes the conversion of 1-hydroxy-2-methyl-2-(E)-butenyl 4-diphosphate (HMBPP) into a mixture of isopentenyl diphosphate (IPP) and dimethylallyl diphosphate (DMAPP). Acts in the terminal step of the DOXP/MEP pathway for isoprenoid precursor biosynthesis. The sequence is that of 4-hydroxy-3-methylbut-2-enyl diphosphate reductase from Rhizobium rhizogenes (strain K84 / ATCC BAA-868) (Agrobacterium radiobacter).